Here is a 437-residue protein sequence, read N- to C-terminus: Adenylosuccinate synthetase (437 aa).

GTP contacts are provided by residues 12-18 and 40-42; these read GDEGKGK and GHT. Catalysis depends on Asp-13, which acts as the Proton acceptor. 2 residues coordinate Mg(2+): Asp-13 and Gly-40. IMP is bound by residues 13-16, 38-41, Thr-128, Arg-142, Gln-223, Thr-238, and Arg-302; these read DEGK and NAGH. His-41 serves as the catalytic Proton donor. Residues 119–138 form a disordered region; sequence QRGERRIGTTGRGIGPTYAD. 298-304 is a binding site for substrate; it reads TTTGRRR. Residues Arg-304, 330–332, and 412–414 each bind GTP; these read KLD and SLG.

It belongs to the adenylosuccinate synthetase family. As to quaternary structure, homodimer. It depends on Mg(2+) as a cofactor.

Its subcellular location is the cytoplasm. It carries out the reaction IMP + L-aspartate + GTP = N(6)-(1,2-dicarboxyethyl)-AMP + GDP + phosphate + 2 H(+). It participates in purine metabolism; AMP biosynthesis via de novo pathway; AMP from IMP: step 1/2. Its function is as follows. Plays an important role in the de novo pathway of purine nucleotide biosynthesis. Catalyzes the first committed step in the biosynthesis of AMP from IMP. In Synechococcus sp. (strain WH7803), this protein is Adenylosuccinate synthetase.